Consider the following 276-residue polypeptide: uncharacterized protein (276 aa).

The N-terminal stretch at 1-19 is a signal peptide; the sequence is MKKWLICSFVLVLLVSFTA. Cys-20 carries the N-palmitoyl cysteine lipid modification. The S-diacylglycerol cysteine moiety is linked to residue Cys-20.

Belongs to the NlpA lipoprotein family.

It is found in the cell membrane. This is an uncharacterized protein from Bacillus subtilis (strain 168).